Here is a 216-residue protein sequence, read N- to C-terminus: UDP-N-acetylglucosamine transferase subunit ALG14 (216 aa).

Over 1–3 the chain is Lumenal; it reads MVC. A helical transmembrane segment spans residues 4–24; sequence VLTLAASAGGLAVLLIVRLWA. The Cytoplasmic portion of the chain corresponds to 25–216; sequence VLRSHPVTPR…PKSVYLGRIV (192 aa).

Belongs to the ALG14 family. In terms of assembly, forms with ALG13 the active heterodimeric UDP-N-acetylglucosamine transferase complex.

Its subcellular location is the endoplasmic reticulum membrane. Functionally, part of the UDP-N-acetylglucosamine transferase complex that operates in the biosynthetic pathway of dolichol-linked oligosaccharides, the glycan precursors employed in protein asparagine (N)-glycosylation. The assembly of dolichol-linked oligosaccharides begins on the cytosolic side of the endoplasmic reticulum membrane and finishes in its lumen. The sequential addition of sugars to dolichol pyrophosphate produces dolichol-linked oligosaccharides containing fourteen sugars, including two GlcNAcs, nine mannoses and three glucoses. Once assembled, the oligosaccharides are transferred from the lipid to nascent proteins by oligosaccharyltransferases. Functions as a protein-membrane adapter recruiting ALG13 at the cytoplasmic face of the endoplasmic reticulum, where the complex catalyzes the second step of dolichol pyrophosphate biosynthesis, transferring a beta1,4-linked N-acetylglucosamine (GlcNAc) from UDP-GlcNAc to GlcNAc-pyrophosphatedolichol (Gn-PDol) to produce N,N'-diacetylchitobiosyl diphosphodolichol. N,N'-diacetylchitobiosyl diphosphodolichol is a substrate for ALG1, the following enzyme in the biosynthetic pathway. In Rattus norvegicus (Rat), this protein is UDP-N-acetylglucosamine transferase subunit ALG14.